A 500-amino-acid polypeptide reads, in one-letter code: NAD(P)H-quinone oxidoreductase chain 4, chloroplastic (500 aa).

14 helical membrane-spanning segments follow: residues 4–24 (FPWLTIIVVLPIFAGSLIFFL), 35–55 (YTICICMLELLLTTYAFCYHF), 87–107 (LGPVLLTGFITTLATLAAWPV), 113–130 (LFHFLMLAMYSGQIGSFS), 134–154 (LLLFFIMWELELIPVYLLLSM), 167–187 (FILYTAGGSIFLLMGVLGVGL), 207–227 (VALEIIFYIGFLIAFAVKLPI), 242–262 (HYSTCMLLAGILLKMGAYGLI), 272–292 (AHSIFSPWLMVVGTIQIIYAA), 305–325 (IAYSSVSHMGFILIGIASITD), 330–350 (GAILQIISHGFIGAALFFLAG), 386–406 (LALPGMSGFVAEVLVFLGIIT), 416–436 (IAITFVMAIGMILTPIYLLSM), and 462–482 (LFVSISIFIPVIGIGMYPDFV).

It belongs to the complex I subunit 4 family.

Its subcellular location is the plastid. The protein localises to the chloroplast thylakoid membrane. It catalyses the reaction a plastoquinone + NADH + (n+1) H(+)(in) = a plastoquinol + NAD(+) + n H(+)(out). The enzyme catalyses a plastoquinone + NADPH + (n+1) H(+)(in) = a plastoquinol + NADP(+) + n H(+)(out). In Helianthus annuus (Common sunflower), this protein is NAD(P)H-quinone oxidoreductase chain 4, chloroplastic.